The primary structure comprises 1018 residues: Putative type I restriction enzyme MjaVIIIP endonuclease subunit (1018 aa).

It belongs to the HsdR family. As to quaternary structure, the type I restriction/modification system is composed of three polypeptides R, M and S.

The catalysed reaction is Endonucleolytic cleavage of DNA to give random double-stranded fragments with terminal 5'-phosphates, ATP is simultaneously hydrolyzed.. The restriction (R) subunit of a type I restriction enzyme that recognizes 5'-GAYN(5)GTAA-3' and cleaves a random distance away. The R subunit is required for both endonuclease and ATPase activities but not for modification. After locating a non-methylated recognition site, the enzyme complex serves as a molecular motor that translocates DNA in an ATP-dependent manner until a collision occurs that triggers cleavage. The protein is Putative type I restriction enzyme MjaVIIIP endonuclease subunit of Methanocaldococcus jannaschii (strain ATCC 43067 / DSM 2661 / JAL-1 / JCM 10045 / NBRC 100440) (Methanococcus jannaschii).